Consider the following 403-residue polypeptide: MVKILNNLIFVLNCGSSSVKFAILNPDNKKKYLSGLVECLFLSKTYMKWKDLTTEHKKCIGSNLSHKDALNFIFNKFFLEKKDIYKNIVGIGHRVVHGGNKIKSSTLIDDNIIQLIQKAISFAPLHNPANLIGIKTAIEKFPIFAKKNVAVFDTSFYQNMPETSFLYAIPYFFYKEHHIRRYGAHGTSHHYVASEVALILNKNFNSLNVITCHLGNGASVSAVCNGICVDTSMGLTPLEGLVMGTRSGDIDPSIIFFMYQKLGMSIDEIHTILTKESGLLGLSGISSDFRYFEKKYYFEKKARLAVDIFCHRLSKYIASYMSLMENNLDAIVFTGGIGENVPLIREITLSKLLLIGFKIDTQRNLGIKNGKHGLITTDKSRPAFVIPTDEELAIAQETIKIIK.

Asparagine 13 lines the Mg(2+) pocket. Lysine 20 serves as a coordination point for ATP. Residue arginine 94 coordinates substrate. Aspartate 153 acts as the Proton donor/acceptor in catalysis. ATP-binding positions include 213 to 217, 288 to 290, and 336 to 340; these read HLGNG, DFR, and GIGEN. Glutamate 390 is a binding site for Mg(2+).

This sequence belongs to the acetokinase family. Homodimer. The cofactor is Mg(2+). It depends on Mn(2+) as a cofactor.

It localises to the cytoplasm. It carries out the reaction acetate + ATP = acetyl phosphate + ADP. It functions in the pathway metabolic intermediate biosynthesis; acetyl-CoA biosynthesis; acetyl-CoA from acetate: step 1/2. Functionally, catalyzes the formation of acetyl phosphate from acetate and ATP. Can also catalyze the reverse reaction. This Buchnera aphidicola subsp. Schizaphis graminum (strain Sg) protein is Acetate kinase.